Here is a 545-residue protein sequence, read N- to C-terminus: Membrane protein insertase YidC (545 aa).

Residues 6–26 (FVLFVFFIFLSFLLWEQWQID) traverse the membrane as a helical segment. Positions 32–69 (QAVAQTDGASRPAGDLPQRPSDDESDVTVHTEAPTQEG) are disordered. Helical transmembrane passes span 354–374 (FFNNWGWAIIFVTLVIKALFF), 425–445 (GGCLPILVQIPVFISLYWVLV), 462–482 (LSSKDPYFVLPLIMGVSMFIQ), and 500–520 (FFPLVFTVFFLFFPSGLVLYW).

Belongs to the OXA1/ALB3/YidC family. Type 1 subfamily. Interacts with the Sec translocase complex via SecD. Specifically interacts with transmembrane segments of nascent integral membrane proteins during membrane integration.

It is found in the cell inner membrane. Its function is as follows. Required for the insertion and/or proper folding and/or complex formation of integral membrane proteins into the membrane. Involved in integration of membrane proteins that insert both dependently and independently of the Sec translocase complex, as well as at least some lipoproteins. Aids folding of multispanning membrane proteins. The polypeptide is Membrane protein insertase YidC (Methylococcus capsulatus (strain ATCC 33009 / NCIMB 11132 / Bath)).